Here is a 344-residue protein sequence, read N- to C-terminus: Outer membrane protein assembly factor BamC (344 aa).

Positions 1–24 (MAYSVQKSRLAKVAGVSLVLLLAA) are cleaved as a signal peptide. A lipid anchor (N-palmitoyl cysteine) is attached at Cys25. Cys25 carries S-diacylglycerol cysteine lipidation.

The protein belongs to the BamC family. In terms of assembly, part of the Bam complex, which is composed of the outer membrane protein BamA, and four lipoproteins BamB, BamC, BamD and BamE. Forms a subcomplex with BamD and BamE. The Bam complex has the shape of a hat, with the BamA beta-barrel crown in the outer membrane and the periplasmic brim formed by the BamA POTRA domains and the 4 lipoproteins.

It localises to the cell outer membrane. Its function is as follows. Part of the outer membrane protein assembly complex (Bam), which is involved in assembly and insertion of beta-barrel proteins into the outer membrane. Nonessential member of the complex that stabilizes the interaction between the essential proteins BamA and BamD. Efficient substrate folding and insertion into the outer membrane requires all 5 subunits. A lateral gate may open between the first and last strands of the BamA beta-barrel that allows substrate to insert into the outer membrane; comparison of the structures of complete and nearly complete Bam complexes show there is considerable movement of all 5 proteins. This is Outer membrane protein assembly factor BamC from Escherichia coli (strain K12).